A 130-amino-acid chain; its full sequence is Mediator of RNA polymerase II transcription subunit 10 (130 aa).

Belongs to the Mediator complex subunit 10 family. Component of the Mediator complex.

Its subcellular location is the nucleus. Functionally, component of the Mediator complex, a coactivator involved in the regulated transcription of nearly all RNA polymerase II-dependent genes. Mediator functions as a bridge to convey information from gene-specific regulatory proteins to the basal RNA polymerase II transcription machinery. Mediator is recruited to promoters by direct interactions with regulatory proteins and serves as a scaffold for the assembly of a functional preinitiation complex with RNA polymerase II and the general transcription factors. The sequence is that of Mediator of RNA polymerase II transcription subunit 10 (MED10) from Anopheles gambiae (African malaria mosquito).